The following is an 86-amino-acid chain: MKTLLLTLVVVTIVCLDLGYTLTCLNCPEMFCGKFQICRNGEKICFKKLHQRRPFSLRYIRGCAATCPETKPRDMVECCSTDRCNR.

Positions 1–21 (MKTLLLTLVVVTIVCLDLGYT) are cleaved as a signal peptide. Disulfide bonds link cysteine 24–cysteine 45, cysteine 27–cysteine 32, cysteine 38–cysteine 63, cysteine 67–cysteine 78, and cysteine 79–cysteine 84.

This sequence belongs to the three-finger toxin family. Ancestral subfamily. Orphan group II sub-subfamily. Expressed by the venom gland.

It is found in the secreted. Binds with low affinity to muscular (alpha-1-beta-1-delta-epsilon/CHRNA1-CHRNB1-CHRND-CHRNE) and very low affinity to neuronal (alpha-7/CHRNA7) nicotinic acetylcholine receptor (nAChR). The protein is Probable weak neurotoxin NNAM2 of Naja atra (Chinese cobra).